The chain runs to 671 residues: DNA ligase (671 aa).

NAD(+) contacts are provided by residues 32-36 (DAEYD), 81-82 (SL), and Glu-113. Lys-115 functions as the N6-AMP-lysine intermediate in the catalytic mechanism. The NAD(+) site is built by Arg-136, Glu-173, Lys-290, and Lys-314. Zn(2+) is bound by residues Cys-408, Cys-411, Cys-426, and Cys-432. The region spanning 593–671 (EIDSPFAGKT…EAEMLRLFGE (79 aa)) is the BRCT domain.

The protein belongs to the NAD-dependent DNA ligase family. LigA subfamily. It depends on Mg(2+) as a cofactor. Requires Mn(2+) as cofactor.

The catalysed reaction is NAD(+) + (deoxyribonucleotide)n-3'-hydroxyl + 5'-phospho-(deoxyribonucleotide)m = (deoxyribonucleotide)n+m + AMP + beta-nicotinamide D-nucleotide.. Its function is as follows. DNA ligase that catalyzes the formation of phosphodiester linkages between 5'-phosphoryl and 3'-hydroxyl groups in double-stranded DNA using NAD as a coenzyme and as the energy source for the reaction. It is essential for DNA replication and repair of damaged DNA. This is DNA ligase from Enterobacter sp. (strain 638).